The sequence spans 155 residues: Ciliary microtubule inner protein 2C (155 aa).

Belongs to the CIMIP2 family.

The protein localises to the cytoplasm. The protein resides in the cytoskeleton. It localises to the cilium axoneme. In terms of biological role, microtubule inner protein (MIP) part of the dynein-decorated doublet microtubules (DMTs) in cilia axoneme, which is required for motile cilia beating. The polypeptide is Ciliary microtubule inner protein 2C (cimip2c) (Xenopus tropicalis (Western clawed frog)).